A 120-amino-acid polypeptide reads, in one-letter code: MITKTSKNATRLKRHARVRAKLSGTAERPRLNVFRSNKNIYAQVIDDVNGVTLVSASTLDKDLKIENSSDAAAATKVGELVAKRAVEKGISNVVFDRGGYLYHGRVKALAEAAREAGLKF.

It belongs to the universal ribosomal protein uL18 family. Part of the 50S ribosomal subunit; part of the 5S rRNA/L5/L18/L25 subcomplex. Contacts the 5S and 23S rRNAs.

This is one of the proteins that bind and probably mediate the attachment of the 5S RNA into the large ribosomal subunit, where it forms part of the central protuberance. This Bacillus pumilus (strain SAFR-032) protein is Large ribosomal subunit protein uL18.